The primary structure comprises 369 residues: Ribosome-interacting GTPase 1 (369 aa).

Serine 2 is modified (N-acetylserine). The OBG-type G domain occupies 66–292; sequence ASVGFVGFPS…LLQVMWDRLN (227 aa). Residues 72-79, 118-122, and 250-253 each bind GTP; these read GFPSVGKS, DLPGI, and NKID. The TGS domain occupies 292 to 368; that stretch reads NLVRIYTKPK…EDEDVVTILK (77 aa).

The protein belongs to the TRAFAC class OBG-HflX-like GTPase superfamily. OBG GTPase family. As to quaternary structure, associates with translating polyribosomes. Interacts with GIR2, TMA46, YAP1 and YGR250C.

The protein resides in the cytoplasm. Involved in ribosomal function. The sequence is that of Ribosome-interacting GTPase 1 (RBG1) from Saccharomyces cerevisiae (strain ATCC 204508 / S288c) (Baker's yeast).